Consider the following 180-residue polypeptide: Large ribosomal subunit protein uL6 (180 aa).

This sequence belongs to the universal ribosomal protein uL6 family. In terms of assembly, part of the 50S ribosomal subunit.

This protein binds to the 23S rRNA, and is important in its secondary structure. It is located near the subunit interface in the base of the L7/L12 stalk, and near the tRNA binding site of the peptidyltransferase center. In Desulforapulum autotrophicum (strain ATCC 43914 / DSM 3382 / VKM B-1955 / HRM2) (Desulfobacterium autotrophicum), this protein is Large ribosomal subunit protein uL6.